Here is a 317-residue protein sequence, read N- to C-terminus: Probable cell division protein WhiA (317 aa).

Residues 281–314 constitute a DNA-binding region (H-T-H motif); it reads SLKELGQMLDPPVGKSGINHRLRRIEKIAEELRK.

It belongs to the WhiA family.

Its function is as follows. Involved in cell division and chromosome segregation. The sequence is that of Probable cell division protein WhiA from Clostridium novyi (strain NT).